An 875-amino-acid chain; its full sequence is Leucine--tRNA ligase (875 aa).

Residues 1–20 show a composition bias toward polar residues; it reads MPSAGSVNAANPAVDTSAQT. The disordered stretch occupies residues 1 to 22; sequence MPSAGSVNAANPAVDTSAQTGR. A 'HIGH' region motif is present at residues 60-70; that stretch reads PYPSGSLHMGH. The short motif at 634–638 is the 'KMSKS' region element; it reads KMSKS. Lys637 contacts ATP.

Belongs to the class-I aminoacyl-tRNA synthetase family.

The protein resides in the cytoplasm. The enzyme catalyses tRNA(Leu) + L-leucine + ATP = L-leucyl-tRNA(Leu) + AMP + diphosphate. This Synechococcus sp. (strain CC9605) protein is Leucine--tRNA ligase.